A 163-amino-acid polypeptide reads, in one-letter code: Glycine cleavage system H protein, mitochondrial (163 aa).

A mitochondrion-targeting transit peptide spans 1 to 34 (MALRMWASSAANALGVSCAPKSHLLPALSLSRCF). Positions 56–137 (VATIGITDHA…YEEGWMVKVK (82 aa)) constitute a Lipoyl-binding domain. Position 96 is an N6-lipoyllysine (Lys96).

This sequence belongs to the GcvH family. As to quaternary structure, the glycine cleavage system is composed of four proteins: P, T, L and H. (R)-lipoate serves as cofactor.

It localises to the mitochondrion. The glycine cleavage system catalyzes the degradation of glycine. The H protein shuttles the methylamine group of glycine from the P protein to the T protein. In Mesembryanthemum crystallinum (Common ice plant), this protein is Glycine cleavage system H protein, mitochondrial (GDCSH).